Consider the following 255-residue polypeptide: Borealin-2 (255 aa).

2 disordered regions span residues 1 to 24 (MAPR…HSFE) and 107 to 156 (IQKP…STGS). The segment covering 124-135 (AGQQRSSSQSKT) has biased composition (polar residues).

The protein belongs to the borealin family. Component of the CPC complex.

The protein localises to the nucleus. It localises to the chromosome. The protein resides in the centromere. Component of the chromosomal passenger complex (CPC), a complex that acts as a key regulator of mitosis. The CPC complex has essential functions at the centromere in ensuring correct chromosome alignment and segregation and is required for chromatin-induced microtubule stabilization and spindle assembly. The chain is Borealin-2 (cdca9) from Danio rerio (Zebrafish).